The chain runs to 332 residues: Ribonucleoside-diphosphate reductase small chain C (332 aa).

3 residues coordinate Fe cation: D76, E107, and H110. Y114 is a catalytic residue. Residues E169, E203, and H206 each contribute to the Fe cation site.

The protein belongs to the ribonucleoside diphosphate reductase small chain family. Homodimer and heterodimer with RNR2A. Heterotetramer of two R1 and two R2 chains. Interacts with CSN7 (via C-terminal tail). Requires Fe cation as cofactor. As to expression, expressed in roots, cauline and rosette leaves, stems and flowers.

The protein resides in the cytoplasm. It is found in the nucleus. The catalysed reaction is a 2'-deoxyribonucleoside 5'-diphosphate + [thioredoxin]-disulfide + H2O = a ribonucleoside 5'-diphosphate + [thioredoxin]-dithiol. Its function is as follows. Provides the precursors necessary for DNA synthesis. Catalyzes the biosynthesis of deoxyribonucleotides from the corresponding ribonucleotides. Involved in DNA damage repair and programmed cell death inhibition. This chain is Ribonucleoside-diphosphate reductase small chain C (TSO2), found in Arabidopsis thaliana (Mouse-ear cress).